Here is a 107-residue protein sequence, read N- to C-terminus: Endonuclease ALBA3 (107 aa).

An N6-acetyllysine mark is found at Lys23 and Lys32.

It belongs to the histone-like Alba family. In terms of assembly, homodimer. Interacts (acetylated and unacetylated) with Sir2A. Requires a divalent metal cation as cofactor. Acetylated. Exists in both acetylated and unacetylated forms but predominantly in an acetylated form. Deacetylated by Sir2A.

The protein localises to the nucleus. It is found in the chromosome. The protein resides in the telomere. Its subcellular location is the cytoplasm. Mild acetylation lowers protein interaction with DNA and high acetylation abolishes DNA-binding activity. DNA binding and endonuclease activity is modulated via deacetylation of Lys-23 by Sir2A. Inhibited in the presence of EDTA and EGTA. Its function is as follows. Possesses DNA-binding and endonuclease activities. Binds DNA cooperatively in sequence-independent manner at the DNA minor groove. Exhibits apurinic/apyrimidinic site-driven endonuclease activity. Binds RNA; shows high affinity for poly(A) and a lower affinity for poly(U) templates. In vitro, prevents transcription after DNA binding. Associates with the telomeric region, the subtelomeric TARE6 repeat sequence and the var gene promoters. The chain is Endonuclease ALBA3 from Plasmodium falciparum (isolate 3D7).